We begin with the raw amino-acid sequence, 61 residues long: DNA gyrase inhibitor YacG (61 aa).

Residues cysteine 14, cysteine 17, cysteine 29, and cysteine 33 each coordinate Zn(2+).

It belongs to the DNA gyrase inhibitor YacG family. As to quaternary structure, interacts with GyrB. Zn(2+) is required as a cofactor.

Functionally, inhibits all the catalytic activities of DNA gyrase by preventing its interaction with DNA. Acts by binding directly to the C-terminal domain of GyrB, which probably disrupts DNA binding by the gyrase. The sequence is that of DNA gyrase inhibitor YacG from Zymomonas mobilis subsp. mobilis (strain ATCC 31821 / ZM4 / CP4).